Reading from the N-terminus, the 153-residue chain is ATP synthase subunit b' (153 aa).

Residues 20–40 (TLPLMAVQVVLLTFILNALFF) form a helical membrane-spanning segment.

This sequence belongs to the ATPase B chain family. F-type ATPases have 2 components, F(1) - the catalytic core - and F(0) - the membrane proton channel. F(1) has five subunits: alpha(3), beta(3), gamma(1), delta(1), epsilon(1). F(0) has four main subunits: a(1), b(1), b'(1) and c(10-14). The alpha and beta chains form an alternating ring which encloses part of the gamma chain. F(1) is attached to F(0) by a central stalk formed by the gamma and epsilon chains, while a peripheral stalk is formed by the delta, b and b' chains.

The protein localises to the cellular thylakoid membrane. Functionally, f(1)F(0) ATP synthase produces ATP from ADP in the presence of a proton or sodium gradient. F-type ATPases consist of two structural domains, F(1) containing the extramembraneous catalytic core and F(0) containing the membrane proton channel, linked together by a central stalk and a peripheral stalk. During catalysis, ATP synthesis in the catalytic domain of F(1) is coupled via a rotary mechanism of the central stalk subunits to proton translocation. In terms of biological role, component of the F(0) channel, it forms part of the peripheral stalk, linking F(1) to F(0). The b'-subunit is a diverged and duplicated form of b found in plants and photosynthetic bacteria. The protein is ATP synthase subunit b' of Prochlorococcus marinus (strain NATL2A).